Reading from the N-terminus, the 369-residue chain is Anthranilate phosphoribosyltransferase (369 aa).

5-phospho-alpha-D-ribose 1-diphosphate contacts are provided by residues Gly85, 88-89 (GD), Thr93, 95-98 (NLST), 113-121 (KHGNRAASS), and Ser125. Gly85 contacts anthranilate. Ser97 is a binding site for Mg(2+). Asn116 contributes to the anthranilate binding site. Arg171 is a binding site for anthranilate. Mg(2+) is bound by residues Asp229 and Glu230.

It belongs to the anthranilate phosphoribosyltransferase family. In terms of assembly, homodimer. It depends on Mg(2+) as a cofactor.

It catalyses the reaction N-(5-phospho-beta-D-ribosyl)anthranilate + diphosphate = 5-phospho-alpha-D-ribose 1-diphosphate + anthranilate. Its pathway is amino-acid biosynthesis; L-tryptophan biosynthesis; L-tryptophan from chorismate: step 2/5. Catalyzes the transfer of the phosphoribosyl group of 5-phosphorylribose-1-pyrophosphate (PRPP) to anthranilate to yield N-(5'-phosphoribosyl)-anthranilate (PRA). This Frankia alni (strain DSM 45986 / CECT 9034 / ACN14a) protein is Anthranilate phosphoribosyltransferase.